Consider the following 30-residue polypeptide: GVIPCGESCVFIPCINKKKCSCKNKVCYRD.

The segment at residues 1–30 is a cross-link (cyclopeptide (Gly-Asp)); that stretch reads GVIPCGESCVFIPCINKKKCSCKNKVCYRD. Disulfide bonds link C5–C20, C9–C22, and C14–C27.

Post-translationally, this is a cyclic peptide. Contains 3 disulfide bonds.

Functionally, probably participates in a plant defense mechanism (Potential). Binds to and induces leakage in phospholipd membranes, particularly ones containing 1-palmitoyl-2-oleophosphatidylethanolamine (POPE). Not active against Gram-negative bacterium E.coli ATCC 25922 or Gram-positive bacterium S.aureus ATCC 25923 up to a concentration of 64 uM. The sequence is that of Cyclotide mech-1 from Melicytus chathamicus (Chatham Island mahoe).